The primary structure comprises 265 residues: NAD kinase 1 (265 aa).

The active-site Proton acceptor is D45. NAD(+)-binding positions include 45–46, H50, 122–123, R148, D150, and A185; these read DG and NE.

Belongs to the NAD kinase family. The cofactor is a divalent metal cation.

The protein resides in the cytoplasm. The catalysed reaction is NAD(+) + ATP = ADP + NADP(+) + H(+). Its function is as follows. Involved in the regulation of the intracellular balance of NAD and NADP, and is a key enzyme in the biosynthesis of NADP. Catalyzes specifically the phosphorylation on 2'-hydroxyl of the adenosine moiety of NAD to yield NADP. The sequence is that of NAD kinase 1 from Halalkalibacterium halodurans (strain ATCC BAA-125 / DSM 18197 / FERM 7344 / JCM 9153 / C-125) (Bacillus halodurans).